We begin with the raw amino-acid sequence, 177 residues long: Macro domain-containing protein in non 5'region (177 aa).

Positions methionine 1–arginine 177 constitute a Macro domain.

It belongs to the MacroD-type family.

The chain is Macro domain-containing protein in non 5'region from Streptomyces griseus.